Consider the following 82-residue polypeptide: Ferredoxin (82 aa).

One can recognise a 4Fe-4S ferredoxin-type domain in the interval 3–31 (KYTIVDKDTCIACGACGAAAPDIYDYDDE). Residues Cys-12, Cys-15, Cys-18, and Cys-62 each coordinate [4Fe-4S] cluster.

The cofactor is [4Fe-4S] cluster.

Ferredoxins are iron-sulfur proteins that transfer electrons in a wide variety of metabolic reactions. This ferredoxin may act as a phosphodonor to cytochrome P450 BioI. This Bacillus subtilis (strain 168) protein is Ferredoxin (fer).